Reading from the N-terminus, the 198-residue chain is Ribonuclease HII (198 aa).

The RNase H type-2 domain maps to Gln-10–Ser-198. The a divalent metal cation site is built by Asp-16, Glu-17, and Asp-108.

Belongs to the RNase HII family. The cofactor is Mn(2+). Mg(2+) serves as cofactor.

It localises to the cytoplasm. The catalysed reaction is Endonucleolytic cleavage to 5'-phosphomonoester.. In terms of biological role, endonuclease that specifically degrades the RNA of RNA-DNA hybrids. This Escherichia fergusonii (strain ATCC 35469 / DSM 13698 / CCUG 18766 / IAM 14443 / JCM 21226 / LMG 7866 / NBRC 102419 / NCTC 12128 / CDC 0568-73) protein is Ribonuclease HII.